A 1201-amino-acid polypeptide reads, in one-letter code: Zinc finger protein sdc-1 (1201 aa).

C2H2-type zinc fingers lie at residues 117 to 139 (LTCA…RGVH), 145 to 168 (YMCQ…RTSC), 233 to 254 (SSCH…GNVH), 268 to 290 (YFCH…WRLH), 486 to 513 (IVCH…LLRH), 521 to 543 (YHCA…INDC), and 652 to 674 (VVCF…DYCH). The interval 1164–1201 (KRRNSETREHELIELDTDDLNEPSTSDGRYSFGHHGYR) is disordered. Residues 1167–1176 (NSETREHELI) are compositionally biased toward basic and acidic residues.

In terms of assembly, component of the SDC complex, which consists of sdc-1, sdc-2 and sdc-3. Within the complex, interacts with sdc-2 and sdc-3.

The protein resides in the nucleus. It localises to the chromosome. Embryonic transcription factor regulating downstream genes involved specifically in the sex determination and dosage compensation pathways, or regulating other genes involved in the coordinate control of both processes. Component of the SDC complex that functions in sex determination and in X chromosome dosage compensation specifically in hermaphrodite (XX) animals. Involved in the recruitment of the condensin I-like dosage compensation complex to the male sex-determining autosomal gene her-1, thereby contributing to its repression and initiating hermaphrodite sexual development. Similarly, might contribute to X-linked gene repression through recruitment of the dosage compensation complex to the X chromosomes in hermaphrodites. Seems to be involved in the depletion of histone H4 lysine 16 acetylation (H4K16ac) on dosage compensated X chromosomes. Plays a role in developmental rate and body fat regulation downstream of the TOR complex 2 pathway. The polypeptide is Zinc finger protein sdc-1 (sdc-1) (Caenorhabditis elegans).